We begin with the raw amino-acid sequence, 180 residues long: 4-hydroxy-3-methylbut-2-enyl diphosphate reductase (180 aa).

Cysteine 12 contributes to the [4Fe-4S] cluster binding site. (2E)-4-hydroxy-3-methylbut-2-enyl diphosphate is bound by residues histidine 41 and histidine 74. Residues histidine 41 and histidine 74 each contribute to the dimethylallyl diphosphate site. Isopentenyl diphosphate-binding residues include histidine 41 and histidine 74. A [4Fe-4S] cluster-binding site is contributed by cysteine 96. Histidine 124 lines the (2E)-4-hydroxy-3-methylbut-2-enyl diphosphate pocket. Residue histidine 124 coordinates dimethylallyl diphosphate. An isopentenyl diphosphate-binding site is contributed by histidine 124. Glutamate 126 functions as the Proton donor in the catalytic mechanism. Residue threonine 168 coordinates (2E)-4-hydroxy-3-methylbut-2-enyl diphosphate.

The protein belongs to the IspH family. [4Fe-4S] cluster is required as a cofactor.

The enzyme catalyses isopentenyl diphosphate + 2 oxidized [2Fe-2S]-[ferredoxin] + H2O = (2E)-4-hydroxy-3-methylbut-2-enyl diphosphate + 2 reduced [2Fe-2S]-[ferredoxin] + 2 H(+). It carries out the reaction dimethylallyl diphosphate + 2 oxidized [2Fe-2S]-[ferredoxin] + H2O = (2E)-4-hydroxy-3-methylbut-2-enyl diphosphate + 2 reduced [2Fe-2S]-[ferredoxin] + 2 H(+). The protein operates within isoprenoid biosynthesis; dimethylallyl diphosphate biosynthesis; dimethylallyl diphosphate from (2E)-4-hydroxy-3-methylbutenyl diphosphate: step 1/1. It participates in isoprenoid biosynthesis; isopentenyl diphosphate biosynthesis via DXP pathway; isopentenyl diphosphate from 1-deoxy-D-xylulose 5-phosphate: step 6/6. Its function is as follows. Catalyzes the conversion of 1-hydroxy-2-methyl-2-(E)-butenyl 4-diphosphate (HMBPP) into a mixture of isopentenyl diphosphate (IPP) and dimethylallyl diphosphate (DMAPP). Acts in the terminal step of the DOXP/MEP pathway for isoprenoid precursor biosynthesis. In Pseudomonas fluorescens, this protein is 4-hydroxy-3-methylbut-2-enyl diphosphate reductase.